Reading from the N-terminus, the 2492-residue chain is Polyketide synthase 19 (2492 aa).

Positions 12-463 constitute a Ketosynthase family 3 (KS3) domain; that stretch reads REPIAIVGTS…GTNAHAIVES (452 aa). Residues Cys202, His341, and His383 each act as for beta-ketoacyl synthase activity in the active site. Positions 571–866 are malonyl-CoA:ACP transacylase (MAT) domain; it reads VFTGQGAQWA…LEVGPHPALK (296 aa). The N-terminal hotdog fold stretch occupies residues 967-1110; sequence HELLGRSVSH…GRIRLWLEQP (144 aa). The dehydratase (DH) domain stretch occupies residues 967 to 1270; the sequence is HELLGRSVSH…GVQMTAIGKP (304 aa). The PKS/mFAS DH domain occupies 967-1273; it reads HELLGRSVSH…MTAIGKPPDR (307 aa). His1001 serves as the catalytic Proton acceptor; for dehydratase activity. Residues 1125 to 1273 are C-terminal hotdog fold; that stretch reads MSELNMAQVY…MTAIGKPPDR (149 aa). Residue Asp1183 is the Proton donor; for dehydratase activity of the active site. A C-methyltransferase (CMeT) domain region spans residues 1431 to 1604; that stretch reads LGAIVKQLGH…KTTGFSGVDI (174 aa). The tract at residues 2118-2293 is ketoreductase (KR) domain; sequence SYLLFGMTGD…AGSIVHISVL (176 aa). The 76-residue stretch at 2404–2479 folds into the Carrier domain; that stretch reads PILEKRFAQA…RVCDDVLVDW (76 aa). Ser2438 is subject to O-(pantetheine 4'-phosphoryl)serine.

Highly reducing polyketide synthase; part of the gene cluster that mediates the biosynthesis of fujikurins A-D, secondary metabolites playing a role during rice infection. The polyketide synthase PKS19 acts with the trans-enoyl reductase FFUJ_12240 and the polyketide transferase FFUJ_12241 to produce fujikurins, however, the biosynthesis pathway has not been identified yet. The protein is Polyketide synthase 19 of Gibberella fujikuroi (strain CBS 195.34 / IMI 58289 / NRRL A-6831) (Bakanae and foot rot disease fungus).